Consider the following 320-residue polypeptide: Cytochrome f (320 aa).

Positions 1–35 (MQMRNTFSWIKEEIIRFIAVSLIIYIITRAPISNA) are cleaved as a signal peptide. Heme-binding residues include tyrosine 36, cysteine 56, cysteine 59, and histidine 60. A helical membrane pass occupies residues 286 to 306 (VQGLLLFLASIILAQIFLVLK).

It belongs to the cytochrome f family. The 4 large subunits of the cytochrome b6-f complex are cytochrome b6, subunit IV (17 kDa polypeptide, petD), cytochrome f and the Rieske protein, while the 4 small subunits are PetG, PetL, PetM and PetN. The complex functions as a dimer. The cofactor is heme.

The protein localises to the plastid. It is found in the chloroplast thylakoid membrane. Functionally, component of the cytochrome b6-f complex, which mediates electron transfer between photosystem II (PSII) and photosystem I (PSI), cyclic electron flow around PSI, and state transitions. The protein is Cytochrome f of Morus indica (Mulberry).